Reading from the N-terminus, the 192-residue chain is uncharacterized protein (192 aa).

Positions 1–17 are cleaved as a signal peptide; it reads MFLHLILLAGLAPVVYL.

This is an uncharacterized protein from Caenorhabditis elegans.